Consider the following 864-residue polypeptide: Paramyosin (864 aa).

The interval 1-30 (MSSLYRDLDSDVSSTRIVRHSYNVYRGSSP) is nonhelical region. Positions 31–853 (SSQNRLESRI…QTVRRSRSMS (823 aa)) form a coiled coil. Residues 854–864 (VSREVTRVVRV) are nonhelical region.

Belongs to the paramyosin family. Homodimer. Phosphorylated. Most abundantly expressed in muscle tissues from byssus retractor and adductor muscles. Low expression in foot, gill, inner mantle and outer mantle.

It is found in the cytoplasm. It localises to the myofibril. In terms of biological role, paramyosin is a major structural component of many thick filaments isolated from invertebrate muscles. This chain is Paramyosin, found in Mytilus galloprovincialis (Mediterranean mussel).